We begin with the raw amino-acid sequence, 473 residues long: Sorting nexin-17 (473 aa).

A PX domain is found at 1-108; that stretch reads MHFSIPETEV…SFLRKAQQET (108 aa). A 1,2-diacyl-sn-glycero-3-phospho-(1D-myo-inositol-3-phosphate) contacts are provided by Arg35, Ser37, Lys61, and Arg74. The region spanning 114–205 is the Ras-associating domain; sequence EEVQLEIYLS…YRIILRKSYW (92 aa). Residues 114–433 are FERM-like; it reads EEVQLEIYLS…DPNREQVVKL (320 aa). The interval 269 to 433 is PTB-like F3 module; sequence GYIKFDPCIT…DPNREQVVKL (165 aa). Residues 391–431 are disordered; that stretch reads SIKKQMQKKRLNGSLQRSDSQQAVKSPPILDSPDPNREQVV. A compositionally biased stretch (polar residues) spans 403 to 414; the sequence is GSLQRSDSQQAV.

The protein belongs to the sorting nexin family. As to quaternary structure, monomer. Interacts with CCDC22, CCDC93, DSCR3 and VPS35L; the interaction with DSCR3 is direct and associates SNX17 with the retriever and CCC complexes.

It is found in the cytoplasm. The protein resides in the early endosome. Its subcellular location is the cytoplasmic vesicle membrane. Its function is as follows. Critical regulator of endosomal recycling of numerous surface proteins, including integrins, signaling receptor and channels. Binds to NPxY sequences in the cytoplasmic tails of target cargos. Associates with retriever and CCC complexes to prevent lysosomal degradation and promote cell surface recycling of numerous cargos such as integrins ITGB1, ITGB5 and their associated alpha subunits. Also required for maintenance of normal cell surface levels of APP and LRP1. Interacts with membranes containing phosphatidylinositol 3-phosphate (PtdIns(3P)). This is Sorting nexin-17 (snx17) from Danio rerio (Zebrafish).